Here is a 528-residue protein sequence, read N- to C-terminus: Ecdysteroid UDP-glucosyltransferase (528 aa).

An N-terminal signal peptide occupies residues Met1–Ala32.

Belongs to the UDP-glycosyltransferase family.

In terms of biological role, catalyzes the transfer of glucose from UDP-glucose to ecdysteroids which are insect molting hormones. Expression of egt interferes with normal insect development and block molting. This is Ecdysteroid UDP-glucosyltransferase (EGT) from Mamestra brassicae nuclear polyhedrosis virus (MbNPV).